A 257-amino-acid chain; its full sequence is Tryptophan synthase alpha chain (257 aa).

Catalysis depends on proton acceptor residues E47 and D58.

It belongs to the TrpA family. As to quaternary structure, tetramer of two alpha and two beta chains.

The enzyme catalyses (1S,2R)-1-C-(indol-3-yl)glycerol 3-phosphate + L-serine = D-glyceraldehyde 3-phosphate + L-tryptophan + H2O. It participates in amino-acid biosynthesis; L-tryptophan biosynthesis; L-tryptophan from chorismate: step 5/5. The alpha subunit is responsible for the aldol cleavage of indoleglycerol phosphate to indole and glyceraldehyde 3-phosphate. The polypeptide is Tryptophan synthase alpha chain (Listeria innocua serovar 6a (strain ATCC BAA-680 / CLIP 11262)).